Here is a 136-residue protein sequence, read N- to C-terminus: MDWGIIIKIFSNIKGGGDHLKKVTILKASILFLAIASFHLFSIPHAFDIGHHYKAVADQQEMHEMKAGQNADDEKKSITGAFTLTALWAMAVLLLTAESKSTGYSRRRQRKKSFILAKFYQSSYFGKLHVQHHPIM.

2 helical membrane passes run 25–47 (ILKA…PHAF) and 78–97 (ITGA…LLTA).

The protein localises to the cell membrane. This is an uncharacterized protein from Bacillus subtilis (strain 168).